Consider the following 251-residue polypeptide: Pyrroloquinoline-quinone synthase (251 aa).

Belongs to the PqqC family.

The catalysed reaction is 6-(2-amino-2-carboxyethyl)-7,8-dioxo-1,2,3,4,7,8-hexahydroquinoline-2,4-dicarboxylate + 3 O2 = pyrroloquinoline quinone + 2 H2O2 + 2 H2O + H(+). Its pathway is cofactor biosynthesis; pyrroloquinoline quinone biosynthesis. Ring cyclization and eight-electron oxidation of 3a-(2-amino-2-carboxyethyl)-4,5-dioxo-4,5,6,7,8,9-hexahydroquinoline-7,9-dicarboxylic-acid to PQQ. The protein is Pyrroloquinoline-quinone synthase of Pseudomonas savastanoi pv. phaseolicola (strain 1448A / Race 6) (Pseudomonas syringae pv. phaseolicola (strain 1448A / Race 6)).